We begin with the raw amino-acid sequence, 409 residues long: Protein PHOSPHATE STARVATION RESPONSE 1 (409 aa).

The span at 1–15 (MEARPVHRSGSRDLT) shows a compositional bias: basic and acidic residues. Disordered stretches follow at residues 1-42 (MEAR…NSQL), 86-108 (EKQQ…NNDS), and 178-226 (ETNS…TGKA). Polar residues-rich tracts occupy residues 16-26 (RTSSIPSTQKP) and 90-108 (HYTG…NNDS). The span at 192–224 (QIPQPQIVQQQPSPSVELRPVSTTSSNSNNGTG) shows a compositional bias: low complexity. The region spanning 222–282 (GTGKARMRWT…HLQKYRTARY (61 aa)) is the HTH myb-type domain. Residues 253–278 (PKGVLKIMKVEGLTIYHVKSHLQKYR) constitute a DNA-binding region (H-T-H motif). Positions 314 to 334 (TEALRLQMEVQKQLHEQLEIQ) form a coiled coil. The short motif at 327 to 332 (LHEQLE) is the LHEQLE element. The segment covering 358–370 (GLTKGTASTSDSA) has biased composition (polar residues). Positions 358–409 (GLTKGTASTSDSAAKSEQEDKKTADSKEVPEEETRKCEELESPQPKRPKIDN) are disordered. Residues 371-396 (AKSEQEDKKTADSKEVPEEETRKCEE) show a composition bias toward basic and acidic residues. S399 is modified (phosphoserine).

This sequence belongs to the MYB-CC family. As to quaternary structure, homodimers and heterodimers. Interacts with SPX1 in a Pi-dependent manner. Does not interact with PHL2 or PHL3. Post-translationally, sumoylated by SIZ1. Sumoylation controls phosphate deficiency responses.

The protein localises to the nucleus. Functionally, transcription factor involved in phosphate starvation signaling. Binds as a dimer to P1BS, an imperfect palindromic sequence 5'-GNATATNC-3', to promote the expression of inorganic phosphate (Pi) starvation-responsive genes. SPX1 is a competitive inhibitor of this DNA-binding. PHR1 binding to its targets is low Pi-dependent. Regulates the expression of miR399. Regulates the expression of IPS1 (At3g09922), a non-coding RNA that mimics the target of miR399 to block the cleavage of PHO2 under Pi-deficient conditions. Regulates lipid remodeling and triacylglycerol accumulation during phosphorus starvation. Required for the shoot-specific hypoxic response. Regulates FER1 expression upon phosphate starvation, linking iron and phosphate homeostasis. Contributes to the homeostasis of both sulfate and phosphate in plants under phosphate deficiency. Required for adaptation to high light and retaining functional photosynthesis during phosphate starvation. Involved in the coregulation of Zn and Pi homeostasis. In Arabidopsis thaliana (Mouse-ear cress), this protein is Protein PHOSPHATE STARVATION RESPONSE 1.